The following is a 274-amino-acid chain: GATA transcription factor 1 (274 aa).

Disordered regions lie at residues 1-39 (MEMESFMDDLLNFSVPEEEEDDDEHTQPPRNITRRKTGL) and 102-132 (SPVSVLETSSHSSTTTTSNSSGGSNGSTAVA). The Nuclear localization signal signature appears at 152–159 (KARSKRRR). The GATA-type zinc finger occupies 190-244 (LIMGRKCQHCGAEKTPQWRAGPAGPKTLCNACGVRYKSGRLVPEYRPANSPTFTA).

It belongs to the type IV zinc-finger family. Class A subfamily. Mostly expressed in roots. Also expressed in stems, flowers and leaves.

The protein localises to the nucleus. In terms of biological role, transcriptional activator that specifically binds 5'-GATA-3' or 5'-GAT-3' motifs within gene promoters. May be involved in the regulation of some light-responsive genes. This Arabidopsis thaliana (Mouse-ear cress) protein is GATA transcription factor 1 (GATA1).